Consider the following 139-residue polypeptide: uncharacterized protein (139 aa).

To S.typhimurium FliF.

In terms of biological role, may be involved in the assembly, structure, or function of the flagellum. May polymerize to form a filamentous structure that is part of the flagellum. This is an uncharacterized protein from Bacillus subtilis (strain 168).